Reading from the N-terminus, the 270-residue chain is Protein-ADP-ribose hydrolase (270 aa).

The Macro domain maps to 73 to 267; it reads VSVKDCQKTN…LYDTYLQKEN (195 aa). Positions 92, 93, and 106 each coordinate ADP-D-ribose. Positions 112, 117, and 119 each coordinate Zn(2+). Residues C119, I120, D121, S212, T213, G214, E215, and F216 each coordinate ADP-D-ribose.

The protein belongs to the MacroD-type family. Zn-Macro subfamily. It depends on Zn(2+) as a cofactor.

The catalysed reaction is 4-O-(ADP-D-ribosyl)-L-aspartyl-[protein] + H2O = L-aspartyl-[protein] + ADP-D-ribose + H(+). In terms of biological role, ADP-ribosylhydrolase that specifically reverses the SirTM-mediated mono-ADP-ribosylation at an asparatate residue of GcvH-L, by releasing ADP-ribose from the target protein. May play a role in the regulation of the response to host-induced oxidative stress. In Streptococcus pyogenes serotype M1, this protein is Protein-ADP-ribose hydrolase.